The sequence spans 740 residues: Ion-translocating oxidoreductase complex subunit C (740 aa).

4Fe-4S ferredoxin-type domains follow at residues 369 to 397 and 407 to 436; these read GEPQEEQSCIRCSACADACPADLLPQQLY and KATTHNIADCIECGACAWVCPSNIPLVQYF. Cysteine 377, cysteine 380, cysteine 383, cysteine 387, cysteine 416, cysteine 419, cysteine 422, and cysteine 426 together coordinate [4Fe-4S] cluster. 3 disordered regions span residues 602–652, 664–685, and 695–714; these read KLEQ…DPRK, ARKLEQQQANAEPEEQVDPRKA, and KARKLEQQQANAEPEEQVDP. Over residues 605-615 the composition is skewed to low complexity; it reads QQQANAEPEQQ.

It belongs to the 4Fe4S bacterial-type ferredoxin family. RnfC subfamily. As to quaternary structure, the complex is composed of six subunits: RsxA, RsxB, RsxC, RsxD, RsxE and RsxG. It depends on [4Fe-4S] cluster as a cofactor.

The protein resides in the cell inner membrane. In terms of biological role, part of a membrane-bound complex that couples electron transfer with translocation of ions across the membrane. Required to maintain the reduced state of SoxR. The chain is Ion-translocating oxidoreductase complex subunit C from Escherichia coli O157:H7.